We begin with the raw amino-acid sequence, 709 residues long: Copper amine oxidase vicK1 (709 aa).

The signal sequence occupies residues 1-20 (MKLFLLFTLTLVNIFSVSLQ). Residue Asp-365 is the Proton acceptor of the active site. A disulfide bond links Cys-383 and Cys-408. Tyr-448 acts as the Schiff-base intermediate with substrate; via topaquinone in catalysis. The residue at position 448 (Tyr-448) is a 2',4',5'-topaquinone. Cu cation is bound by residues His-496 and His-498. Residues Asp-505, Leu-506, Asp-507, Glu-548, Phe-641, Glu-645, Asp-651, and Leu-652 each contribute to the Ca(2+) site. His-662 serves as a coordination point for Cu cation.

The protein belongs to the copper/topaquinone oxidase family. As to quaternary structure, homodimer; disulfide-linked. The cofactor is Cu cation. Ca(2+) serves as cofactor. Requires L-topaquinone as cofactor. In terms of processing, topaquinone (TPQ) is generated by copper-dependent autoxidation of a specific tyrosyl residue.

It functions in the pathway mycotoxin biosynthesis. Functionally, copper amine oxidase, part of the gene cluster that mediates the biosynthesis of the secondary metabolite victorin, the molecular basis for Victoria blight of oats. Within the pathway, vicK1 catalyzes the oxidative deamination of the N-terminal glycyl moiety of the hexapeptides in order to produce the active glyoxylate form victorins. The pathway starts with the processing of the precursor vicA1 by several endopeptidases including kexin proteases as well as the cluster-specific S28 family peptidases vicPa and vicPb to produce 7 identical copies of the hexapeptide Gly-Leu-Lys-Leu-Ala-Phe. After being excised from the precursor peptide, the core peptides are cyclized and modified post-translationally by enzymes encoded within the gene cluster. The ustYa family oxidase vicYb is required for the formation of the macrocycle in victorin and the copper amine oxidases (CAOs) vicK1 and vicK2 are responsible for converting victorin to the active form by oxidizing the N-terminal glycyl residue in the peptides to glyoxylate. Relaxed substrate specificity of enzymes in the victorin biosynthetic pathway results in a metabolic grid that produces a set of analogs including victorinines B, C, E or HV-toxin M. The sequence is that of Copper amine oxidase vicK1 from Bipolaris victoriae (strain FI3) (Victoria blight of oats agent).